The primary structure comprises 507 residues: Type II methyltransferase M.PstI (507 aa).

This sequence belongs to the N(4)/N(6)-methyltransferase family. As to quaternary structure, monomer.

The enzyme catalyses a 2'-deoxyadenosine in DNA + S-adenosyl-L-methionine = an N(6)-methyl-2'-deoxyadenosine in DNA + S-adenosyl-L-homocysteine + H(+). Functionally, a gamma subtype methylase that recognizes the double-stranded sequence 5'-CTGCAG-3', methylates A-5 on both strands, and protects the DNA from cleavage by the PstI endonuclease. The chain is Type II methyltransferase M.PstI (pstIM) from Providencia stuartii.